We begin with the raw amino-acid sequence, 94 residues long: Co-chaperonin GroES (94 aa).

Belongs to the GroES chaperonin family. As to quaternary structure, heptamer of 7 subunits arranged in a ring. Interacts with the chaperonin GroEL.

The protein localises to the cytoplasm. Functionally, together with the chaperonin GroEL, plays an essential role in assisting protein folding. The GroEL-GroES system forms a nano-cage that allows encapsulation of the non-native substrate proteins and provides a physical environment optimized to promote and accelerate protein folding. GroES binds to the apical surface of the GroEL ring, thereby capping the opening of the GroEL channel. The protein is Co-chaperonin GroES of Lactococcus lactis subsp. cremoris (strain MG1363).